The chain runs to 749 residues: MSTTIIGFPRLGEFRELKFTTEKYFRNEITADELLAAAKDLRAKHWNIVKEKGITEIPSNDFSHYDNFLDAAFLFNVVPESVKNLDLTELEQYFALARGYQGEKGDVRALPMKKWFNTNYHYIVPKFEKTTAVKLAGHKIFDEYQEAKDLGLDTRPVVVGPFTFLQLSDFEDGVKAEDFVDSFIAAYQDVFAKLAELGATRIQLDEPALVKDLTADEKALFLNLYNKILADKKGLEVLIQTYFGDVRDVYNDLVNLPVDAIGLDFVEGKKTLELVKGGFPADKTLYAGIVNGKNIWRNNYEKSLAVLEQIPAEKIVLTSSCSLLHVPFTTANEEFEPAILNHFAFAVEKLDELRDLDAIRNGQGAESLAANKELFAIERVGANAELRARIAGLTEADYTRLPAFAEREAIQKDAFKLPLLPTTTIGSFPQTKEVRAKRLAFRKNELSQEEYDAFLAEIIDEWIKWQEEVGFDVLVHGEFERNDMVEYFGQNLSGYLFSKNGWVQSYGMRGVKPPIIWGDVTRLNPITVKWSSYAQSRTDKPVKGMLTGPVTILNWSFPREDISIKDSTLQIALAIKDEVLDLEAAGIKIIQIDEAALREKLPLRRSDWYEDYLDWAIPAFRLVHSTVAPDTQIHTHMCYSEFTDIIPAIDNLDADVISFEASRSNLEILDELKAQNFQTEVGPGVYDIHSPRVPQDGEIDHTIEAILAKVPSSKVWINPDCGLKTRGIKETKESLTKLLEAAKAARKNL.

5-methyltetrahydropteroyltri-L-glutamate-binding positions include 15–18 and Lys-114; that span reads RELK. L-homocysteine contacts are provided by residues 425 to 427 and Glu-478; that span reads IGS. L-methionine is bound by residues 425–427 and Glu-478; that span reads IGS. Residue Trp-555 participates in 5-methyltetrahydropteroyltri-L-glutamate binding. Asp-593 provides a ligand contact to L-homocysteine. Asp-593 contributes to the L-methionine binding site. Glu-599 serves as a coordination point for 5-methyltetrahydropteroyltri-L-glutamate. Zn(2+) contacts are provided by His-636, Cys-638, and Glu-660. Residue His-689 is the Proton donor of the active site. Cys-721 lines the Zn(2+) pocket.

This sequence belongs to the vitamin-B12 independent methionine synthase family. Zn(2+) serves as cofactor.

The enzyme catalyses 5-methyltetrahydropteroyltri-L-glutamate + L-homocysteine = tetrahydropteroyltri-L-glutamate + L-methionine. It functions in the pathway amino-acid biosynthesis; L-methionine biosynthesis via de novo pathway; L-methionine from L-homocysteine (MetE route): step 1/1. Functionally, catalyzes the transfer of a methyl group from 5-methyltetrahydrofolate to homocysteine resulting in methionine formation. This Streptococcus thermophilus (strain ATCC BAA-491 / LMD-9) protein is 5-methyltetrahydropteroyltriglutamate--homocysteine methyltransferase.